A 184-amino-acid chain; its full sequence is MKIAQEIRAGNVIMHGKDPMIVLKTEYARGGRGAATVRMKLKSLLGNMGTEVVFKADDKIDNVILDKKECTYSYFADPMYVWMDADFNQYEVEATNMGDAINYLEDGMEAEVVFYDGKAISCELPTSVEREITWTEPAVKGDTSGKVLKPAKIATGFEVPVPLFVSQGDKIEIDTRTGEYRKRV.

The protein belongs to the elongation factor P family.

Its subcellular location is the cytoplasm. The protein operates within protein biosynthesis; polypeptide chain elongation. Functionally, involved in peptide bond synthesis. Stimulates efficient translation and peptide-bond synthesis on native or reconstituted 70S ribosomes in vitro. Probably functions indirectly by altering the affinity of the ribosome for aminoacyl-tRNA, thus increasing their reactivity as acceptors for peptidyl transferase. This Delftia acidovorans (strain DSM 14801 / SPH-1) protein is Elongation factor P.